Reading from the N-terminus, the 62-residue chain is uncharacterized protein (62 aa).

It belongs to the asfivirus C62L family.

This is an uncharacterized protein from African swine fever virus (strain Badajoz 1971 Vero-adapted) (Ba71V).